The sequence spans 95 residues: Aspartyl/glutamyl-tRNA(Asn/Gln) amidotransferase subunit C (95 aa).

This sequence belongs to the GatC family. As to quaternary structure, heterotrimer of A, B and C subunits.

It carries out the reaction L-glutamyl-tRNA(Gln) + L-glutamine + ATP + H2O = L-glutaminyl-tRNA(Gln) + L-glutamate + ADP + phosphate + H(+). It catalyses the reaction L-aspartyl-tRNA(Asn) + L-glutamine + ATP + H2O = L-asparaginyl-tRNA(Asn) + L-glutamate + ADP + phosphate + 2 H(+). Allows the formation of correctly charged Asn-tRNA(Asn) or Gln-tRNA(Gln) through the transamidation of misacylated Asp-tRNA(Asn) or Glu-tRNA(Gln) in organisms which lack either or both of asparaginyl-tRNA or glutaminyl-tRNA synthetases. The reaction takes place in the presence of glutamine and ATP through an activated phospho-Asp-tRNA(Asn) or phospho-Glu-tRNA(Gln). This Thioalkalivibrio sulfidiphilus (strain HL-EbGR7) protein is Aspartyl/glutamyl-tRNA(Asn/Gln) amidotransferase subunit C.